We begin with the raw amino-acid sequence, 329 residues long: Isoaspartyl peptidase/L-asparaginase (329 aa).

Residue Thr-173 is the Nucleophile of the active site. Substrate contacts are provided by residues 201-204 (RVSD) and 222-225 (TGVG).

Belongs to the Ntn-hydrolase family. Heterotetramer of two alpha and two beta chains arranged as a dimer of alpha/beta heterodimers. Cleaved into an alpha and beta chain by autocatalysis; this activates the enzyme. The N-terminal residue of the beta subunit is responsible for the nucleophile hydrolase activity.

It catalyses the reaction Cleavage of a beta-linked Asp residue from the N-terminus of a polypeptide.. Functionally, degrades proteins damaged by L-isoaspartyl residue formation (also known as beta-Asp residues). Probably performs the final step in the degradation of the reserve polymer cyanophycin (depolymerizes the building block L-beta-Asp-Arg). Also has L-asparaginase activity. The protein is Isoaspartyl peptidase/L-asparaginase of Synechocystis sp. (strain ATCC 27184 / PCC 6803 / Kazusa).